The following is a 302-amino-acid chain: MKWFEVAIKTVEEAEDAISNILYDLGANGVVIEDDEILKYPNSWDYIDENQFPKRNFAVVRAYFPESVNISELIFNIEERLKDASQYLNIGEGKIDISEVDEKDWANEWKKYYKPVEIGNIVIVPSWESYPNTKDKTVIKLDPGMAFGTGTHESTMLCLEAVQKYIKPGFDVIDIGTGSGILAIAAKKLGANRVLAVDIDDVAVKVARENAALNNVEIEIKQNDLVFGIEEKFDIAIANIIADIIIKLAKDIKNVLKEYGLFISSGIIEDRLDDVIKSFKENLLEVVEVKKLNNWCLVVARK.

S-adenosyl-L-methionine is bound by residues T155, G176, D198, and N239.

The protein belongs to the methyltransferase superfamily. PrmA family.

The protein localises to the cytoplasm. It carries out the reaction L-lysyl-[protein] + 3 S-adenosyl-L-methionine = N(6),N(6),N(6)-trimethyl-L-lysyl-[protein] + 3 S-adenosyl-L-homocysteine + 3 H(+). Functionally, methylates ribosomal protein L11. The sequence is that of Ribosomal protein L11 methyltransferase from Caldicellulosiruptor saccharolyticus (strain ATCC 43494 / DSM 8903 / Tp8T 6331).